The primary structure comprises 566 residues: Bicarbonate transporter BicA (566 aa).

At 1-15 (MQITNKIHFRNIRGD) the chain is on the cytoplasmic side. A helical membrane pass occupies residues 16–36 (IFGGLTAAVIALPMALAFGVA). Topologically, residues 37–42 (SGAGAE) are periplasmic. The chain crosses the membrane as a helical span at residues 43 to 63 (AGLWGAVLVGFFAALFGGTPT). Leu-64 is a topological domain (cytoplasmic). Residues 65-85 (ISEPTGPMTVVMTAVIAHFTA) traverse the membrane as a helical segment. Residue Thr-69 coordinates hydrogencarbonate. Residues 86–93 (SAATPEEG) are Periplasmic-facing. A helical membrane pass occupies residues 94 to 114 (LAIAFTVVMMAGVFQIIFGSL). Topologically, residues 115–126 (KLGKYVTMMPYT) are cytoplasmic. The chain crosses the membrane as a helical span at residues 127 to 147 (VISGFMSGIGIILVILQLAPF). At 148-169 (LGQASPGGGVIGTLQNLPTLLS) the chain is on the periplasmic side. The helical transmembrane segment at 170–190 (NIQPGETALALGTVAIIWFMP) threads the bilayer. At 191 to 196 (EKFKKV) the chain is on the cytoplasmic side. Residues 197–217 (IPPQLVALVLGTVIAFFVFPP) traverse the membrane as a helical segment. Topologically, residues 218–247 (EVSDLRRIGEIRAGFPELVRPSFSPVEFQR) are periplasmic. A helical transmembrane segment spans residues 248 to 268 (MILDAAVLGMLGCIDALLTSV). Asp-262, Thr-266, and Gly-304 together coordinate Na(+). Residues 269–318 (VADSLTRTEHNSNKELIGQGLGNLFSGLFGGIAGAGATMGTVVNIQSGGR) are Cytoplasmic-facing. Ala-305 provides a ligand contact to hydrogencarbonate. Na(+) is bound at residue Thr-306. The helical transmembrane segment at 319–339 (TALSGLVRAFVLLVVILGAAS) threads the bilayer. Position 340 (Leu-340) is a topological domain, periplasmic. The chain crosses the membrane as a helical span at residues 341–361 (TATIPLAVLAGIAFKVGVDII). The Cytoplasmic segment spans residues 362 to 371 (DWSFLKRAHE). A helical membrane pass occupies residues 372-392 (ISPKGALIMYGVILLTVLVDL). A topological domain (periplasmic) is located at residue Ile-393. A helical transmembrane segment spans residues 394–414 (VAVGVGVFVANVLTIERMSNL). Topologically, residues 415 to 566 (QSEKVQTVSD…GVTAPSSEMG (152 aa)) are cytoplasmic. The STAS domain maps to 436-546 (KRWLDEGQGR…MSREEALKNA (111 aa)).

It belongs to the SLC26A/SulP transporter (TC 2.A.53) family.

It localises to the cell inner membrane. In terms of biological role, low/medium affinity, Na(+)-dependent bicarbonate transporter. This chain is Bicarbonate transporter BicA (bicA), found in Picosynechococcus sp. (strain ATCC 27264 / PCC 7002 / PR-6) (Agmenellum quadruplicatum).